A 154-amino-acid polypeptide reads, in one-letter code: Nuclear cap-binding protein subunit 2 (154 aa).

MRNA contacts are provided by residues tyrosine 10, tyrosine 33, 102 to 106, 113 to 117, and 123 to 124; these read RVDWD, RQYGR, and QV. An RRM domain is found at 30–108; the sequence is CTLYVGNLSF…RLIRVDWDAG (79 aa).

Belongs to the RRM NCBP2 family. In terms of assembly, component of the nuclear cap-binding complex (CBC), a heterodimer composed of Cbp80 and Cbp20 that interacts with m7GpppG-capped RNA. Interacts with Ars2.

Its subcellular location is the nucleus. Functionally, component of the cap-binding complex (CBC), which binds co-transcriptionally to the 5' cap of pre-mRNAs and is involved in various processes such as pre-mRNA splicing and RNA-mediated gene silencing (RNAi). The CBC complex is involved in miRNA-mediated RNA interference via its interaction with Ars2 and is required for primary microRNAs (miRNAs) processing. Also involved in innate immunity via the short interfering RNAs (siRNAs) processing machinery by restricting the viral RNA production. In the CBC complex, Cbp20 recognizes and binds capped RNAs (m7GpppG-capped RNA) but requires Cbp80 to stabilize the movement of its N-terminal loop and lock the CBC into a high affinity cap-binding state with the cap structure. In Drosophila persimilis (Fruit fly), this protein is Nuclear cap-binding protein subunit 2 (Cbp20).